A 311-amino-acid chain; its full sequence is Heme A synthase (311 aa).

Residues 1–6 (MQRFIK) are Cytoplasmic-facing. Residues 7 to 27 (WLAVITSLDLLIVLLGGALVT) form a helical membrane-spanning segment. Over 28-62 (KTGSGQGCGKSWPLCNGEFVPSNLSMETIIELSHR) the chain is Extracellular. A disulfide bridge connects residues Cys-35 and Cys-42. The active site involves Glu-58. His-61 contacts heme o. Residues 63 to 83 (LTSGSAGILVTLLCILSWKYY) form a helical membrane-spanning segment. Topologically, residues 84-91 (KHVRETKT) are cytoplasmic. A helical membrane pass occupies residues 92 to 112 (LAILSFVFLVAQALMGAAAVV). The Extracellular portion of the chain corresponds to 113–121 (WGQMPAVLA). Residues 122–142 (IHFGISLISFASVILLTCLIF) traverse the membrane as a helical segment. His-123 is a heme o binding site. Topologically, residues 143 to 159 (EIDQKFDARSLIMDKKM) are cytoplasmic. The chain crosses the membrane as a helical span at residues 160–180 (KFHIYGVTIYSYIVVYTGALV). At 181-211 (RHERASLACPDFPLCSKNRPMPTQLHEWVQM) the chain is on the extracellular side. A disulfide bridge connects residues Cys-189 and Cys-195. A helical transmembrane segment spans residues 212–232 (GHRVAAMLIFAWILYAMILAI). Heme b is bound at residue His-213. Over 233–243 (RHYKQQPVVYW) the chain is Cytoplasmic. Residues 244 to 264 (GWIISFILVTLQAIVGILVVF) traverse the membrane as a helical segment. Over 265–271 (TNASLSM) the chain is Extracellular. A helical membrane pass occupies residues 272-292 (ALLHSLFISCLFAVLCYLVML). Heme b is bound at residue His-275. At 293-311 (GTRSKVNAKEAASTSKQTK) the chain is on the cytoplasmic side.

The protein belongs to the COX15/CtaA family. Type 1 subfamily. In terms of assembly, interacts with CtaB. It depends on heme b as a cofactor.

The protein localises to the cell membrane. The catalysed reaction is Fe(II)-heme o + 2 A + H2O = Fe(II)-heme a + 2 AH2. Its pathway is porphyrin-containing compound metabolism; heme A biosynthesis; heme A from heme O: step 1/1. Catalyzes the conversion of heme O to heme A by two successive hydroxylations of the methyl group at C8. The first hydroxylation forms heme I, the second hydroxylation results in an unstable dihydroxymethyl group, which spontaneously dehydrates, resulting in the formyl group of heme A. In Bacillus cereus (strain ATCC 10987 / NRS 248), this protein is Heme A synthase.